The primary structure comprises 321 residues: Chitinase-like protein 1 (321 aa).

The signal sequence occupies residues 1–26; it reads MVTIRSGSIVILVLLAVSFLALVANG. An intrachain disulfide couples C42 to C55. N-linked (GlcNAc...) asparagine glycosylation is present at N57. C157 and C167 form a disulfide bridge. N208 and N244 each carry an N-linked (GlcNAc...) asparagine glycan. Cysteines 267 and 304 form a disulfide. A disordered region spans residues 297–321; that stretch reads GPNDELSCAEQKPFNPSTVPSSSSS. A compositionally biased stretch (polar residues) spans 310–321; sequence FNPSTVPSSSSS.

Belongs to the glycosyl hydrolase 19 family. Mostly expressed in seedlings shoots and roots, stems, and flowers, and, to a lower extent, in flowers, mature leaves and roots.

Its subcellular location is the secreted. Its function is as follows. No chitinase activity. Essential for normal plant growth and development. Regulates cell expansion extent and differentiation at least in roots and hypocotyls. Prevents lignin accumulation in the pith. May modulate ethylene-mediated regulation during development. Probably required to establish thermotolerance acclimation. Plays a role for controlled anisotropic cell expansion in the regulation of waving during root gravitropism and thigmotropism. Involved in the root system architecture adaptation to multiple environmental conditions such as nitrate. Contributes to salt tolerance and possibly to drought by preventing the overaccumulation of sodium ions. The protein is Chitinase-like protein 1 (CTL1) of Arabidopsis thaliana (Mouse-ear cress).